Reading from the N-terminus, the 265-residue chain is Mycothiol acetyltransferase (265 aa).

N-acetyltransferase domains are found at residues 1–110 (MDDL…PPLP) and 118–265 (VSVR…YVRG). D3 contributes to the 1D-myo-inositol 2-(L-cysteinylamino)-2-deoxy-alpha-D-glucopyranoside binding site. 44 to 46 (VQV) serves as a coordination point for acetyl-CoA. 1D-myo-inositol 2-(L-cysteinylamino)-2-deoxy-alpha-D-glucopyranoside contacts are provided by E145, R185, and E198. Residues 202–204 (LGV) and 209–215 (HCKGLGK) each bind acetyl-CoA. Residue Y236 coordinates 1D-myo-inositol 2-(L-cysteinylamino)-2-deoxy-alpha-D-glucopyranoside.

This sequence belongs to the acetyltransferase family. MshD subfamily. Monomer.

The enzyme catalyses 1D-myo-inositol 2-(L-cysteinylamino)-2-deoxy-alpha-D-glucopyranoside + acetyl-CoA = mycothiol + CoA + H(+). In terms of biological role, catalyzes the transfer of acetyl from acetyl-CoA to desacetylmycothiol (Cys-GlcN-Ins) to form mycothiol. In Segniliparus rotundus (strain ATCC BAA-972 / CDC 1076 / CIP 108378 / DSM 44985 / JCM 13578), this protein is Mycothiol acetyltransferase.